Here is a 386-residue protein sequence, read N- to C-terminus: Cysteine protease Amb a 11.0101 (386 aa).

An N-terminal signal peptide occupies residues 1 to 22 (MEINKLVCFSFSLVLILGLVES). The T-cell epitope. MHC class II peptide able to activate CD(4+) T cells of the ragweed pollen-allergic patients indicated by significantly increased IL-2 production compared to non-allergic individuals. Not recognized by IgE of the patients allergic to ragweed pollen stretch occupies residues 6 to 20 (LVCFSFSLVLILGLV). Positions 23–108 (FHYHERELES…SKISHFQALR (86 aa)) are cleaved as a propeptide — activation peptide. A glycan (N-linked (GlcNAc...) (complex) asparagine) is linked at Asn-127. 3 disulfides stabilise this stretch: Cys-152/Cys-193, Cys-186/Cys-226, and Cys-283/Cys-334. Residue Cys-155 is part of the active site. The B-cell epitope. Binds to IgE of the patients allergic to ragweed pollen stretch occupies residues 173-186 (GKLVKFSEQQLVDC). Active-site residues include His-289 and Asn-310. The tract at residues 340 to 377 (SSFPIMNDPNPPKDDPNGPKDDPDAPKDPKFKTTQRLQ) is disordered. Basic and acidic residues predominate over residues 350 to 370 (PPKDDPNGPKDDPDAPKDPKF). Positions 371 to 386 (KTTQRLQGIRTKLLEL) are cleaved as a propeptide — removed in mature form.

It belongs to the peptidase C1 family. In terms of assembly, homodimer. Post-translationally, autocatalytic proteolytic cleavage of N-terminal activation peptide. In terms of processing, N-glycosylated. Glycosylation is not required for binding to IgE. In terms of tissue distribution, expressed in pollen (at protein and mRNA level).

With respect to regulation, activated by L-cysteine. Inhibited by cysteine protease inhibitor E64 (L-trans-epoxysuccinyl-leucylamide-(4-guanido)-butane). Inhibited by cysteine/serine protease inhibitor leupeptin. Not inhibited by serine protease inhibitors 4-(2-aminoethyl)benzenesulfonyl fluoride hydrochloride (AEBSF) and phenylmethanesulfonyl fluoride (PMSF), metallo protease inhibitor bestatin or aspartic protease inhibitor pepstatin A. In terms of biological role, cysteine protease. Hydrolyzes casein and synthetic peptide Boc-Val-Leu-Lys-7-amino-4-methylcoumarin (Boc-VLK-AMC) in vitro. This Ambrosia artemisiifolia (Common ragweed) protein is Cysteine protease Amb a 11.0101.